The chain runs to 255 residues: tRNA (guanine-N(1)-)-methyltransferase (255 aa).

S-adenosyl-L-methionine is bound by residues Gly113 and 133–138 (IGDYVL).

The protein belongs to the RNA methyltransferase TrmD family. In terms of assembly, homodimer.

Its subcellular location is the cytoplasm. The catalysed reaction is guanosine(37) in tRNA + S-adenosyl-L-methionine = N(1)-methylguanosine(37) in tRNA + S-adenosyl-L-homocysteine + H(+). Its function is as follows. Specifically methylates guanosine-37 in various tRNAs. This Salmonella schwarzengrund (strain CVM19633) protein is tRNA (guanine-N(1)-)-methyltransferase.